The chain runs to 471 residues: UDP-glycosyltransferase CGT (471 aa).

The active-site Proton acceptor is the histidine 24. Position 24 (histidine 24) interacts with an anthocyanidin. The active-site Charge relay is aspartate 120. Threonine 143 contributes to the UDP-alpha-D-glucose binding site. Positions 280–281 are UDP; it reads SR. Residues valine 343, glutamine 345, histidine 360, tryptophan 363, asparagine 364, serine 365, and glutamate 368 each coordinate UDP-alpha-D-glucose. Glycine 383 is an an anthocyanidin binding site. Positions 384 and 385 each coordinate UDP-alpha-D-glucose.

Belongs to the UDP-glycosyltransferase family.

The catalysed reaction is a 3'-hydro-2'-hydroxy-beta-oxodihydrochalcone + UDP-alpha-D-glucose = a 3'-(beta-D-glucopyranosyl)-2'-hydroxy-beta-oxodihydrochalcone + UDP + H(+). Functionally, UDP-glucose-dependent glucosyltransferase catalyzing the c-glucosylation of 2-hydroxyflavanones. Acts preferentially on the dibenzoylmethane tautomers formed in equilibrium with 2-hydroxyflavanones. No activity with naringenin or naringenin chalcone. This Oryza sativa subsp. indica (Rice) protein is UDP-glycosyltransferase CGT.